A 46-amino-acid chain; its full sequence is GIFSKLAGKKIKNLLISGLKNVGKEVGMDVVRTGIDIAGCKIKGEC.

An intrachain disulfide couples Cys40 to Cys46.

This sequence belongs to the frog skin active peptide (FSAP) family. Brevinin subfamily. As to expression, expressed by the skin glands.

It localises to the secreted. Shows antibacterial activity against representative Gram-negative and Gram-positive bacterial species, and hemolytic activity. The chain is Esculentin-1A from Pelophylax lessonae (Pool frog).